The chain runs to 249 residues: UPF0246 protein EUBREC_1226 (249 aa).

It belongs to the UPF0246 family.

This chain is UPF0246 protein EUBREC_1226, found in Agathobacter rectalis (strain ATCC 33656 / DSM 3377 / JCM 17463 / KCTC 5835 / VPI 0990) (Eubacterium rectale).